The chain runs to 165 residues: NADPH-dependent 7-cyano-7-deazaguanine reductase (165 aa).

C56 acts as the Thioimide intermediate in catalysis. Catalysis depends on D63, which acts as the Proton donor. Substrate is bound by residues 78-80 (VES) and 97-98 (HE).

This sequence belongs to the GTP cyclohydrolase I family. QueF type 1 subfamily.

It localises to the cytoplasm. It carries out the reaction 7-aminomethyl-7-carbaguanine + 2 NADP(+) = 7-cyano-7-deazaguanine + 2 NADPH + 3 H(+). The protein operates within tRNA modification; tRNA-queuosine biosynthesis. In terms of biological role, catalyzes the NADPH-dependent reduction of 7-cyano-7-deazaguanine (preQ0) to 7-aminomethyl-7-deazaguanine (preQ1). This Bacillus pumilus (strain SAFR-032) protein is NADPH-dependent 7-cyano-7-deazaguanine reductase.